Here is a 360-residue protein sequence, read N- to C-terminus: GTP 3',8-cyclase 2 (360 aa).

Residues 33-259 form the Radical SAM core domain; the sequence is TFGRVANDLR…PDPAPRGSAP (227 aa). Residue R42 coordinates GTP. Residues C49 and C53 each coordinate [4Fe-4S] cluster. Residue Y55 participates in S-adenosyl-L-methionine binding. A [4Fe-4S] cluster-binding site is contributed by C56. R93 contacts GTP. G97 serves as a coordination point for S-adenosyl-L-methionine. GTP is bound at residue T124. S148 lines the S-adenosyl-L-methionine pocket. K185 contributes to the GTP binding site. M219 serves as a coordination point for S-adenosyl-L-methionine. C287 and C290 together coordinate [4Fe-4S] cluster. 292–294 contacts GTP; it reads RTR. Position 304 (C304) interacts with [4Fe-4S] cluster.

Belongs to the radical SAM superfamily. MoaA family. As to quaternary structure, monomer and homodimer. [4Fe-4S] cluster is required as a cofactor.

The catalysed reaction is GTP + AH2 + S-adenosyl-L-methionine = (8S)-3',8-cyclo-7,8-dihydroguanosine 5'-triphosphate + 5'-deoxyadenosine + L-methionine + A + H(+). The protein operates within cofactor biosynthesis; molybdopterin biosynthesis. In terms of biological role, catalyzes the cyclization of GTP to (8S)-3',8-cyclo-7,8-dihydroguanosine 5'-triphosphate. This chain is GTP 3',8-cyclase 2, found in Mycobacterium bovis (strain ATCC BAA-935 / AF2122/97).